The primary structure comprises 825 residues: BEN domain-containing protein 3 (825 aa).

The span at 1–11 (MNSTEISEDVE) shows a compositional bias: acidic residues. Residues 1-35 (MNSTEISEDVEEVLKNNPVKAEGSDATLDCSRNSR) are disordered. Lys20 is covalently cross-linked (Glycyl lysine isopeptide (Lys-Gly) (interchain with G-Cter in SUMO); alternate). A Glycyl lysine isopeptide (Lys-Gly) (interchain with G-Cter in SUMO1); alternate cross-link involves residue Lys20. Lys20 participates in a covalent cross-link: Glycyl lysine isopeptide (Lys-Gly) (interchain with G-Cter in SUMO2); alternate. Glycyl lysine isopeptide (Lys-Gly) (interchain with G-Cter in SUMO2) cross-links involve residues Lys39, Lys54, Lys56, Lys71, Lys126, Lys127, Lys135, Lys140, Lys156, and Lys174. A disordered region spans residues 52-122 (SSKRKQLDSD…EEEPSTEATV (71 aa)). The Nuclear localization signal motif lies at 54–56 (KRK). Positions 239 to 340 (PPPEYQLTAS…DFFSRFWAQR (102 aa)) constitute a BEN 1 domain. Ser376 is subject to Phosphoserine. Residues 384–484 (ASDHVVDTQD…DELEGLGLEG (101 aa)) form the BEN 2 domain. Lys424 participates in a covalent cross-link: Glycyl lysine isopeptide (Lys-Gly) (interchain with G-Cter in SUMO2). Ser486 is modified (phosphoserine). Residue Lys509 forms a Glycyl lysine isopeptide (Lys-Gly) (interchain with G-Cter in SUMO); alternate linkage. Lys509 is covalently cross-linked (Glycyl lysine isopeptide (Lys-Gly) (interchain with G-Cter in SUMO2); alternate). A Glycyl lysine isopeptide (Lys-Gly) (interchain with G-Cter in SUMO2) cross-link involves residue Lys525. In terms of domain architecture, BEN 3 spans 547–647 (GSDCLLSKEQ…ERCRRRDTEQ (101 aa)). A Glycyl lysine isopeptide (Lys-Gly) (interchain with G-Cter in SUMO2) cross-link involves residue Lys697. One can recognise a BEN 4 domain in the interval 712–813 (VPSPYLLSDK…ERCRRPNRKK (102 aa)).

As to quaternary structure, homooligomer, probably a homooctamer. Interacts with HDAC2 and HDAC3, but not HDAC1. Interacts with SALL4. Interacts with SMARCA5/SNF2H, BAZ2A/TIP5 and USP21. Interacts with the nucleosome remodeling and histone deacetylase (NuRD) repressor complex. Interacts (via BEN domains 1 and 3) with ERCC6L (via N-terminal TPR repeat); the interaction is direct. In terms of processing, sumoylated at Lys-20 by SUMO1 and at Lys-509 by SUMO1, SUMO2 and SUMO3. Sumoylation probably occurs sequentially, with that of Lys-20 preceding that of Lys-509. It does not alter association with heterochromatin, but is required for the repression of transcription.

The protein resides in the nucleus. It is found in the nucleolus. In terms of biological role, transcriptional repressor which associates with the NoRC (nucleolar remodeling complex) complex and plays a key role in repressing rDNA transcription. The sumoylated form modulates the stability of the NoRC complex component BAZ2A/TIP5 by controlling its USP21-mediated deubiquitination. Binds to unmethylated major satellite DNA and is involved in the recruitment of the Polycomb repressive complex 2 (PRC2) to major satellites. Stimulates the ERCC6L translocase and ATPase activities. The polypeptide is BEN domain-containing protein 3 (Bend3) (Mus musculus (Mouse)).